We begin with the raw amino-acid sequence, 137 residues long: Nucleoside diphosphate kinase (137 aa).

ATP is bound by residues Lys11, Phe59, Arg87, Thr93, Arg104, and Asn114. The active-site Pros-phosphohistidine intermediate is the His117.

The protein belongs to the NDK family. As to quaternary structure, homotetramer. Requires Mg(2+) as cofactor.

It is found in the cytoplasm. The catalysed reaction is a 2'-deoxyribonucleoside 5'-diphosphate + ATP = a 2'-deoxyribonucleoside 5'-triphosphate + ADP. The enzyme catalyses a ribonucleoside 5'-diphosphate + ATP = a ribonucleoside 5'-triphosphate + ADP. Its function is as follows. Major role in the synthesis of nucleoside triphosphates other than ATP. The ATP gamma phosphate is transferred to the NDP beta phosphate via a ping-pong mechanism, using a phosphorylated active-site intermediate. In Frankia alni (strain DSM 45986 / CECT 9034 / ACN14a), this protein is Nucleoside diphosphate kinase.